A 435-amino-acid chain; its full sequence is MPHIRHLAQQCRDAARILATLSTDAKRRLLETMATALNTDAATILAANAADLDTARTQQVGTAMLDRLALDPQRLAAMADALRDIAALPDPVGQVTRDDRRPNGIHIQKIRVPLGVIAMIYEARPNVTADAAALCIKAGNGIILRGGSEAIRSNIAIATALQRALRLASLPETALILVQDMARHTMLELLQLSDLIDLVIPRGGEGLIRFVAEHARIPVIKHYKGVCHQFVDASADIEMAIRLLIDGKTTRPAACNALETLLVHTDIAPRFLPAAAAALRPYGVQLRGDHATCTLLPDVLLATDADYAAEYLDLILAIRIVPNLDAALEHIRRYGSDHTEVIVTADPAHADTFVQQLHSAVVMVNASSRFSDGGALGLGAEIGISTTRLHAYGPMGLDALTVERFVVRGQGQVRHCPLIHLHRDVSVANMPPITS.

This sequence belongs to the gamma-glutamyl phosphate reductase family.

The protein localises to the cytoplasm. It catalyses the reaction L-glutamate 5-semialdehyde + phosphate + NADP(+) = L-glutamyl 5-phosphate + NADPH + H(+). It participates in amino-acid biosynthesis; L-proline biosynthesis; L-glutamate 5-semialdehyde from L-glutamate: step 2/2. Catalyzes the NADPH-dependent reduction of L-glutamate 5-phosphate into L-glutamate 5-semialdehyde and phosphate. The product spontaneously undergoes cyclization to form 1-pyrroline-5-carboxylate. This Xylella fastidiosa (strain M12) protein is Gamma-glutamyl phosphate reductase.